The following is a 404-amino-acid chain: MVRNLRSSEPQKISRFPRHHGEGKKASSPALNLQWPGQKQVASAVAPEMRKRAPPKNNNTSIHRNCRKHLRKEGDWWIVEGGQNHKKAAHSPLKTKPVNKEGNRKKYGRPPREVEGKWLTSLIAATTEAVLRQLGKGKSPTAHTKSNQSRVPLQHSEKTAKGIKYATPQPKKKAHEQRKELPHWPPTKRSHGANKGQGAPVRAPAKTQGKGEEQPHTMRTWAQVAAPKKQKVTSKPPMAQKKKAQGEKKGAAANPFHWELQVEQLLKDAEQIRESMYIRFLHVRQSWWSTCFKAHMEFHCPVCGFAHPEETITVTHCRQQHPGGPPDSLHPDNNRESGAVSQVPPAHFRRWWLSSHIWRKRKISTLLSPKLPVPEQGDYPNARSGIGTGAPHSPHHCDRSAGPP.

Composition is skewed to polar residues over residues 1 to 11 (MVRNLRSSEPQ) and 29 to 41 (PALN…QKQV). 5 disordered regions span residues 1-62 (MVRN…NTSI), 86-111 (KKAA…GRPP), 134-251 (LGKG…KKGA), 317-341 (CRQQ…GAVS), and 369-404 (PKLP…AGPP). Positions 98-111 (VNKEGNRKKYGRPP) are enriched in basic and acidic residues. A compositionally biased stretch (polar residues) spans 141–151 (TAHTKSNQSRV). The C2H2-type zinc finger occupies 300-321 (CPVCGFAHPEETITVTHCRQQH). Positions 395–404 (HHCDRSAGPP) are enriched in basic and acidic residues.

The chain is Retrotransposable element SLACS 45 kDa protein from Trypanosoma brucei gambiense.